Reading from the N-terminus, the 369-residue chain is DNA replication and repair protein RecF (369 aa).

An ATP-binding site is contributed by 30–37; the sequence is GPNGSGKT.

It belongs to the RecF family.

It localises to the cytoplasm. Functionally, the RecF protein is involved in DNA metabolism; it is required for DNA replication and normal SOS inducibility. RecF binds preferentially to single-stranded, linear DNA. It also seems to bind ATP. The chain is DNA replication and repair protein RecF from Chlorobium luteolum (strain DSM 273 / BCRC 81028 / 2530) (Pelodictyon luteolum).